Here is a 61-residue protein sequence, read N- to C-terminus: Nakoroxin (61 aa).

4 disulfides stabilise this stretch: Cys3/Cys19, Cys12/Cys37, Cys41/Cys49, and Cys50/Cys55.

It belongs to the three-finger toxin family. Short-chain subfamily. Expressed by the venom gland.

The protein resides in the secreted. Functionally, shows no cytotoxicity and does not inhibit the binding of alpha-bungarotoxin to nicotinic acetylcholine receptors of muscle and alpha-7/CHRNA7 types. However, it potentiates the binding of alpha-bungarotoxin to the acetylcholine-binding protein from Lymnaea stagnalis. The protein is Nakoroxin of Naja kaouthia (Monocled cobra).